The chain runs to 142 residues: Large ribosomal subunit protein uL29 (142 aa).

The protein belongs to the universal ribosomal protein uL29 family.

The chain is Large ribosomal subunit protein uL29 (RPL35) from Theileria annulata.